A 421-amino-acid chain; its full sequence is BEN domain-containing protein 5 (421 aa).

An N6-acetyllysine modification is found at Lys133. Residues 180–243 (RALYEELLRN…LNRRLQDVLL (64 aa)) are a coiled coil. Lys258 is covalently cross-linked (Glycyl lysine isopeptide (Lys-Gly) (interchain with G-Cter in SUMO2)). The 107-residue stretch at 302 to 408 (GSGIWVDEEK…EKIMDINKSC (107 aa)) folds into the BEN domain.

Acts as a transcriptional repressor. This chain is BEN domain-containing protein 5 (Bend5), found in Mus musculus (Mouse).